The chain runs to 144 residues: Large ribosomal subunit protein uL15 (144 aa).

Positions 1-14 (MKLHELKPNEGARD) are enriched in basic and acidic residues. The disordered stretch occupies residues 1–43 (MKLHELKPNEGARDVRKRVGRGTSSGTGKTAGRGQKGQKARSK). A compositionally biased stretch (gly residues) spans 23–35 (TSSGTGKTAGRGQ).

Belongs to the universal ribosomal protein uL15 family. As to quaternary structure, part of the 50S ribosomal subunit.

In terms of biological role, binds to the 23S rRNA. The chain is Large ribosomal subunit protein uL15 from Latilactobacillus sakei subsp. sakei (strain 23K) (Lactobacillus sakei subsp. sakei).